The following is a 1246-amino-acid chain: Stromal processing peptidase, chloroplastic (1246 aa).

The N-terminal 136 residues, Met-1–His-136, are a transit peptide targeting the chloroplast. His-228 contacts Zn(2+). Glu-231 serves as the catalytic Proton acceptor. His-232 lines the Zn(2+) pocket. Glu-302 is a catalytic residue. Glu-309 is a Zn(2+) binding site.

It belongs to the peptidase M16 family. Zn(2+) is required as a cofactor. Widely expressed.

The protein resides in the plastid. The protein localises to the chloroplast stroma. Its function is as follows. Cleaves presequences (transit peptides) from chloroplastic protein precursors. Initially recognizes a precursor by binding to the C-terminus of its transit peptide and then removes the transit peptide in a single endoproteolytic step. In a next step, pursues the cleavage of transit peptide to a subfragment form. The polypeptide is Stromal processing peptidase, chloroplastic (Oryza sativa subsp. indica (Rice)).